We begin with the raw amino-acid sequence, 535 residues long: MGFALVLIFLFGFYLFLMKSSSIFPQRPFTFLYDLWVLLLVLRFLFSLIQILILCLFNFRFVEMTSNNKKKKTELCDLPKCLAPHILSWLPTKTAVTVSLLFMKGWWRSEMKNLSSLKFSFSDDQEEEHFVRFVDQVLRQRGNRKLDSFSLTLNDEIDGGFVTHLVDYPLDNGVEKLKLSIYDIKGNFQLSSRVFSQATLVTLKLATNRSLIWINGDDVAAAHLPCLKTLWLDDVLVADVKVFVRLLSRCPILEELVMIDMKWHNWEACFVVSASLRRLKIVWTDYVEMDEYDRCPQSVLFDTPNVLYLEYTDHIAGQYPLLKFSSLIEAKIRLEMIDEKEEEDEGQEVIVGDNATAFITGITSVRKLYLYANTIQVLHHYFDPPIPEFVYLTHLTIQSDKELGWDAIPELLSKCPHLETLVLEGLFHLATDVCGDVCPCRRNMEQAISYLVKSPVTHLEIYEGVVGKKRGEVTEDAARFGEQVRWFLMRMLHLQQVKIYGQTEDSVTALYDIATELRRLEGKASPNVQISVLQA.

Helical transmembrane passes span 3–23 (FALV…SSSI), 37–57 (VLLL…LCLF), and 82–102 (LAPH…SLLF). Residues 73–119 (TELCDLPKCLAPHILSWLPTKTAVTVSLLFMKGWWRSEMKNLSSLKF) enclose the F-box; degenerate domain.

Part of a SCF (ASK-cullin-F-box) protein ligase complex. Interacts with ASK4.

It localises to the membrane. It participates in protein modification; protein ubiquitination. Functionally, component of SCF(ASK-cullin-F-box) E3 ubiquitin ligase complexes, which may mediate the ubiquitination and subsequent proteasomal degradation of target proteins. This is F-box protein At1g56610 from Arabidopsis thaliana (Mouse-ear cress).